We begin with the raw amino-acid sequence, 497 residues long: Alkane hydroxylase MAH1 (497 aa).

A helical membrane pass occupies residues 3-23 (MLGFYVTFIFFLVCLFTYFFL). Residue C444 participates in heme binding.

It belongs to the cytochrome P450 family. Requires heme as cofactor. As to expression, expressed in the expanding regions of the inflorescence stems, specifically to the epidermal pavement cells, petioles and siliques.

It is found in the endoplasmic reticulum membrane. In terms of biological role, involved in the formation of secondary alcohols and ketones in stem cuticular wax. Catalyzes the hydroxylation of a methylene unit in the middle of alkane molecules to form secondary alcohols and possibly also a second hydroxylation leading to the corresponding ketones. The protein is Alkane hydroxylase MAH1 of Arabidopsis thaliana (Mouse-ear cress).